The following is a 1475-amino-acid chain: Sex-determining transformer protein 2 (1475 aa).

The first 31 residues, 1-31, serve as a signal peptide directing secretion; the sequence is MKLKYNKLLVSVVIVTFVTFGLLLAECFGKS. 11 helical membrane passes run 446–466, 474–494, 496–516, 589–609, 737–757, 902–922, 928–948, 952–972, 979–999, 1034–1054, and 1060–1080; these read TIHF…IFVW, AFMF…VCST, GVIV…LANL, WGCT…FIDS, GVIL…LLFI, AVGV…LFAF, AGIF…TPTI, FLFS…VHLF, IYTN…FCAL, IAQF…ICSI, and IFFV…FNSI. The interaction with fem-3 stretch occupies residues 1133–1273; that stretch reads EFSIKRSSPP…RERNLMNKRS (141 aa). 2 disordered regions span residues 1142–1194 and 1267–1330; these read PCRY…GDNT and NLMN…VDEP. A compositionally biased stretch (basic residues) spans 1178–1188; sequence RSPKTGNKRVR. Residues 1276-1310 show a composition bias toward basic and acidic residues; the sequence is QRRESRNIEKMKKSQENLDKEKSEEKISESKKNQD. Residues 1392 to 1413 form an MX regulatory domain; required for tra-1 binding region; it reads CEDIYWTHRTGQLPPGLQVPRR. The disordered stretch occupies residues 1424–1475; sequence TPPPEDLNWVPPAESPPIPIPQQAFDLLEERRRNHREQQDEAREGDLSDPEV. Positions 1451–1469 are enriched in basic and acidic residues; the sequence is LEERRRNHREQQDEAREGD.

As to quaternary structure, interacts with tra-1 and fem-3. In terms of processing, undergoes cleavage by tra-3 to produce a feminizing carboxy-terminal isoform Tra-2B. As to expression, somatic and germline tissues. Isoform Tra-2B is specific to oocytes.

The protein localises to the membrane. Plays a major role in controlling sexual cell fates. Promotes female development in XX animals where it sequesters one or more of the FEM proteins to the membrane thereby freeing the tra-1 protein (a putative transcription factor) to enter the nucleus and promote female development. In XO animals it acts as a receptor for her-1 which prevents it from binding to FEM proteins thereby repressing the activity of tra-1. Negatively regulates male development when bound to fem-3 and is required together with tra-1 for promoting spermatogenesis. Also required for feminizing tra-3 activity. This Caenorhabditis elegans protein is Sex-determining transformer protein 2 (tra-2).